Reading from the N-terminus, the 36-residue chain is Photosystem I reaction center subunit VIII (36 aa).

Residues Ile9 to Tyr29 form a helical membrane-spanning segment.

Belongs to the PsaI family.

It is found in the plastid. The protein localises to the chloroplast thylakoid membrane. Its function is as follows. May help in the organization of the PsaL subunit. The protein is Photosystem I reaction center subunit VIII of Tupiella akineta (Green alga).